Here is a 346-residue protein sequence, read N- to C-terminus: N-acetyl-gamma-glutamyl-phosphate reductase (346 aa).

Residue Cys149 is part of the active site.

This sequence belongs to the NAGSA dehydrogenase family. Type 1 subfamily.

The protein resides in the cytoplasm. It catalyses the reaction N-acetyl-L-glutamate 5-semialdehyde + phosphate + NADP(+) = N-acetyl-L-glutamyl 5-phosphate + NADPH + H(+). Its pathway is amino-acid biosynthesis; L-arginine biosynthesis; N(2)-acetyl-L-ornithine from L-glutamate: step 3/4. Functionally, catalyzes the NADPH-dependent reduction of N-acetyl-5-glutamyl phosphate to yield N-acetyl-L-glutamate 5-semialdehyde. The protein is N-acetyl-gamma-glutamyl-phosphate reductase of Geotalea daltonii (strain DSM 22248 / JCM 15807 / FRC-32) (Geobacter daltonii).